A 76-amino-acid chain; its full sequence is Acyl carrier protein (76 aa).

One can recognise a Carrier domain in the interval 1–75; the sequence is MIFEKIKDLI…DIVFYITKNT (75 aa). Ser35 carries the O-(pantetheine 4'-phosphoryl)serine modification.

This sequence belongs to the acyl carrier protein (ACP) family. 4'-phosphopantetheine is transferred from CoA to a specific serine of apo-ACP by AcpS. This modification is essential for activity because fatty acids are bound in thioester linkage to the sulfhydryl of the prosthetic group.

It localises to the cytoplasm. The protein operates within lipid metabolism; fatty acid biosynthesis. Its function is as follows. Carrier of the growing fatty acid chain in fatty acid biosynthesis. The sequence is that of Acyl carrier protein from Aster yellows witches'-broom phytoplasma (strain AYWB).